Consider the following 553-residue polypeptide: Coiled-coil domain-containing protein 22 homolog (553 aa).

Coiled coils occupy residues 261-404 and 498-553; these read LEEL…TATQ and NVTK…VAKA.

It belongs to the CCDC22 family.

The chain is Coiled-coil domain-containing protein 22 homolog from Drosophila pseudoobscura pseudoobscura (Fruit fly).